Reading from the N-terminus, the 450-residue chain is MQLNIEEKSSVKKVLHIEIPKEDVAKELDTAYNELKKTATVKGFRKGKIPRKILETRFSKDVHADLVPHLVQNAFSEALDEHKFNLVGGPQVDPPELTPGEALSFDISIEVMPELEAVDFKGIELKKTMYEATDQEVDAQIQMIRKTMATKEKVTEERPVKVEDFVLIDYQGFVDGAPCDAAPKVENYVMAIGSNTLPAEFSEKLLGAIPVKEMDIDVVYADDDKDEALAGKTVIYKVTLKEIQEQILPPVDDTLVENLGQYKNLDELKAAILDNLKKGYEQRTQHELSEQIFTDLLEKIEFEVPDTMVDAELQGIIAEAEQAYAQNNIKLEDVGLSQDFLKTQYRGVAEKQARRHILLGKIIDQENLELTEDELEAGYAEMALGMNASVDAVKNFFKMDGRQLEYYKHTQLEKKAVRLIIEQGSVTEVAPEVETEVSESAADVEDKTDQ.

Positions 163–249 constitute a PPIase FKBP-type domain; it reads EDFVLIDYQG…LKEIQEQILP (87 aa). Positions 431 to 443 are enriched in acidic residues; it reads PEVETEVSESAAD. Residues 431 to 450 are disordered; that stretch reads PEVETEVSESAADVEDKTDQ.

It belongs to the FKBP-type PPIase family. Tig subfamily.

The protein resides in the cytoplasm. The enzyme catalyses [protein]-peptidylproline (omega=180) = [protein]-peptidylproline (omega=0). In terms of biological role, involved in protein export. Acts as a chaperone by maintaining the newly synthesized protein in an open conformation. Functions as a peptidyl-prolyl cis-trans isomerase. This chain is Trigger factor, found in Desulforapulum autotrophicum (strain ATCC 43914 / DSM 3382 / VKM B-1955 / HRM2) (Desulfobacterium autotrophicum).